Reading from the N-terminus, the 500-residue chain is NAD(P)H-quinone oxidoreductase chain 4, chloroplastic (500 aa).

The next 14 membrane-spanning stretches (helical) occupy residues 4-24, 37-57, 87-107, 113-130, 134-154, 167-187, 208-228, 242-262, 272-292, 305-325, 330-350, 386-406, 416-436, and 462-482; these read FPWL…IGFL, ICIC…HFQL, MGPV…AWPV, LFHF…GSFS, LLLF…LLSL, FILY…GMGL, ALEI…SPII, HYST…YGLV, AHSI…IYAA, IAYS…SITD, GSIL…FLAG, LALP…GIIT, ILIT…SLSM, and LFIL…PDFV.

It belongs to the complex I subunit 4 family.

It localises to the plastid. The protein localises to the chloroplast thylakoid membrane. It catalyses the reaction a plastoquinone + NADH + (n+1) H(+)(in) = a plastoquinol + NAD(+) + n H(+)(out). The enzyme catalyses a plastoquinone + NADPH + (n+1) H(+)(in) = a plastoquinol + NADP(+) + n H(+)(out). This is NAD(P)H-quinone oxidoreductase chain 4, chloroplastic from Illicium oligandrum (Star anise).